The primary structure comprises 367 residues: MTSTQRTLMVMAGGTGGHVFPGLAVAHRMQAQGWRVVWLGNPAGMEATLVPRHGIPMEYVRFGGLRGKGLATKFALPFNLLRACAQSLRALRRVKPDVVLGMGGYITFPAGLVTVLTGRPLVLHEQNSIAGLTNKVLAKLAKRVLVAFPGALPNAEWTGNPIRTELARTEPPQARYAARSGKLRLLVVGGSLGAAALNEVVPRALALLAPDERPQVVHQAGAKHIDTLKENYEAAGLSCGSDVALVPFIDDMASAYANADLVICRSGAMTVAEIAAVGVAALFVPFPHAVDDHQTTNAEFLAEQGAAVLVQQRDLSAELLADWLRGQSRDSLAAMAERSRSLAKPDATDEVARVCAAVAGANQEGKQ.

UDP-N-acetyl-alpha-D-glucosamine contacts are provided by residues 15–17 (TGG), N127, R163, S191, I249, and Q294.

The protein belongs to the glycosyltransferase 28 family. MurG subfamily.

Its subcellular location is the cell inner membrane. The catalysed reaction is di-trans,octa-cis-undecaprenyl diphospho-N-acetyl-alpha-D-muramoyl-L-alanyl-D-glutamyl-meso-2,6-diaminopimeloyl-D-alanyl-D-alanine + UDP-N-acetyl-alpha-D-glucosamine = di-trans,octa-cis-undecaprenyl diphospho-[N-acetyl-alpha-D-glucosaminyl-(1-&gt;4)]-N-acetyl-alpha-D-muramoyl-L-alanyl-D-glutamyl-meso-2,6-diaminopimeloyl-D-alanyl-D-alanine + UDP + H(+). Its pathway is cell wall biogenesis; peptidoglycan biosynthesis. Functionally, cell wall formation. Catalyzes the transfer of a GlcNAc subunit on undecaprenyl-pyrophosphoryl-MurNAc-pentapeptide (lipid intermediate I) to form undecaprenyl-pyrophosphoryl-MurNAc-(pentapeptide)GlcNAc (lipid intermediate II). The polypeptide is UDP-N-acetylglucosamine--N-acetylmuramyl-(pentapeptide) pyrophosphoryl-undecaprenol N-acetylglucosamine transferase (Burkholderia pseudomallei (strain 668)).